The sequence spans 97 residues: Co-chaperonin GroES (97 aa).

Belongs to the GroES chaperonin family. In terms of assembly, heptamer of 7 subunits arranged in a ring. Interacts with the chaperonin GroEL.

It localises to the cytoplasm. Its function is as follows. Together with the chaperonin GroEL, plays an essential role in assisting protein folding. The GroEL-GroES system forms a nano-cage that allows encapsulation of the non-native substrate proteins and provides a physical environment optimized to promote and accelerate protein folding. GroES binds to the apical surface of the GroEL ring, thereby capping the opening of the GroEL channel. In Escherichia fergusonii (strain ATCC 35469 / DSM 13698 / CCUG 18766 / IAM 14443 / JCM 21226 / LMG 7866 / NBRC 102419 / NCTC 12128 / CDC 0568-73), this protein is Co-chaperonin GroES.